The following is a 439-amino-acid chain: UDP-N-acetylmuramate--L-alanine ligase (439 aa).

113-119 (GSHGKTS) serves as a coordination point for ATP.

This sequence belongs to the MurCDEF family.

The protein resides in the cytoplasm. It catalyses the reaction UDP-N-acetyl-alpha-D-muramate + L-alanine + ATP = UDP-N-acetyl-alpha-D-muramoyl-L-alanine + ADP + phosphate + H(+). It participates in cell wall biogenesis; peptidoglycan biosynthesis. Cell wall formation. This chain is UDP-N-acetylmuramate--L-alanine ligase, found in Lactobacillus delbrueckii subsp. bulgaricus (strain ATCC 11842 / DSM 20081 / BCRC 10696 / JCM 1002 / NBRC 13953 / NCIMB 11778 / NCTC 12712 / WDCM 00102 / Lb 14).